A 360-amino-acid chain; its full sequence is MKATIIFLLVAQVSWAGPFQQKGLFDFMLEDEASGIGPEEHFPEVPEIEPMGPVCPFRCQCHLRVVQCSDLGLEKVPKDLPPDTALLDLQNNKITEIKDGDFKNLKNLHTLILINNKISKISPGAFAPLVKLERLYLSKNQLKELPEKMPKTLQELRVHENEITKVRKSVFNGLNQMIVVELGTNPLKSSGIENGAFQGMKKLSYIRIADTNITTIPQGLPPSLTELHLDGNKITKVDAASLKGLNNLAKLGLSFNSISAVDNGSLANTPHLRELHLNNNKLVKVPGGLADHKYIQVVYLHNNNISAIGSNDFCPPGYNTKKASYSGVSLFSNPVQYWEIQPSTFRCVYVRAAVQLGNYK.

Residues 1–16 (MKATIIFLLVAQVSWA) form the signal peptide. A propeptide spanning residues 17-30 (GPFQQKGLFDFMLE) is cleaved from the precursor. S34 carries O-linked (Xyl...) (glycosaminoglycan) serine glycosylation. 2 disulfides stabilise this stretch: C55–C61 and C59–C68. 12 LRR repeats span residues 74 to 94 (EKVPKDLPPDTALLDLQNNKI), 95 to 118 (TEIKDGDFKNLKNLHTLILINNKI), 119 to 142 (SKISPGAFAPLVKLERLYLSKNQL), 143 to 163 (KELPEKMPKTLQELRVHENEI), 164 to 187 (TKVRKSVFNGLNQMIVVELGTNPL), 188 to 213 (KSSGIENGAFQGMKKLSYIRIADTNI), 214 to 234 (TTIPQGLPPSLTELHLDGNKI), 235 to 258 (TKVDAASLKGLNNLAKLGLSFNSI), 259 to 282 (SAVDNGSLANTPHLRELHLNNNKL), 283 to 305 (VKVPGGLADHKYIQVVYLHNNNI), 306 to 335 (SAIGSNDFCPPGYNTKKASYSGVSLFSNPV), and 336 to 360 (QYWEIQPSTFRCVYVRAAVQLGNYK). A glycan (N-linked (GlcNAc...) asparagine) is linked at N212. 2 N-linked (GlcNAc...) asparagine glycosylation sites follow: N263 and N304. The cysteines at positions 314 and 347 are disulfide-linked.

The protein belongs to the small leucine-rich proteoglycan (SLRP) family. SLRP class I subfamily. Binds to type I and type II collagen, fibronectin and TGF-beta. Forms a ternary complex with MFAP2 and ELN. Interacts with DPT. In terms of processing, the attached glycosaminoglycan chain can be either chondroitin 4-sulfate, chondroitin 6-sulfate or dermatan sulfate, depending upon the tissue of origin.

It localises to the secreted. It is found in the extracellular space. Its subcellular location is the extracellular matrix. May affect the rate of fibrils formation. The protein is Decorin (DCN) of Bos taurus (Bovine).